A 381-amino-acid chain; its full sequence is Heterogeneous nuclear rnp K-like protein 2 (381 aa).

The segment at 1–34 (MSQFFEAATPVAIPTNNTNGGSSDAGSAATGGAP) is disordered. Over residues 15 to 33 (TNNTNGGSSDAGSAATGGA) the composition is skewed to low complexity. 3 KH domains span residues 43–107 (TINH…IGDI), 156–221 (IGYV…LIEI), and 258–326 (NTRI…ESML). Residues 357-381 (RSDSASFLEEKEEPQKNHDNKEEQS) are disordered. Phosphoserine occurs at positions 358, 360, and 362. Positions 369–381 (EPQKNHDNKEEQS) are enriched in basic and acidic residues.

This sequence belongs to the HEK2 family. Binds RNA. Phosphorylated by the plasma membrane-Anchored casein kinase YCK1. Phosphorylation at its C-terminus reduces its RNA-binding capacity.

It localises to the cytoplasm. The protein localises to the P-body. It is found in the nucleus. Its subcellular location is the chromosome. The protein resides in the telomere. Its function is as follows. RNA-binding protein involved in the correct localization of transcripts in the cell. RNA localization is a widespread mechanism for achieving localized protein synthesis. Required for the asymmetric localization to the daughter cell nucleus of the ASH1 transcript, coding for a specific repressor of transcription. Overexpression inhibits translation of the ASH1 transcript. Involved in the stability of transcripts, like the MTL1 mRNA. Involved in structural and functional organization of telomeric chromatin and regulates silencing at the HMR locus. The protein is Heterogeneous nuclear rnp K-like protein 2 (HEK2) of Saccharomyces cerevisiae (strain RM11-1a) (Baker's yeast).